The chain runs to 343 residues: Biotin synthase (343 aa).

A Radical SAM core domain is found at 36–254 (RQVQVSTLLS…IAVARIMMPR (219 aa)). Positions 51, 55, and 58 each coordinate [4Fe-4S] cluster. Residues cysteine 95, cysteine 126, cysteine 186, and arginine 258 each coordinate [2Fe-2S] cluster.

This sequence belongs to the radical SAM superfamily. Biotin synthase family. In terms of assembly, homodimer. The cofactor is [4Fe-4S] cluster. [2Fe-2S] cluster serves as cofactor.

The enzyme catalyses (4R,5S)-dethiobiotin + (sulfur carrier)-SH + 2 reduced [2Fe-2S]-[ferredoxin] + 2 S-adenosyl-L-methionine = (sulfur carrier)-H + biotin + 2 5'-deoxyadenosine + 2 L-methionine + 2 oxidized [2Fe-2S]-[ferredoxin]. Its pathway is cofactor biosynthesis; biotin biosynthesis; biotin from 7,8-diaminononanoate: step 2/2. Catalyzes the conversion of dethiobiotin (DTB) to biotin by the insertion of a sulfur atom into dethiobiotin via a radical-based mechanism. This Erwinia tasmaniensis (strain DSM 17950 / CFBP 7177 / CIP 109463 / NCPPB 4357 / Et1/99) protein is Biotin synthase.